We begin with the raw amino-acid sequence, 124 residues long: Large ribosomal subunit protein bL12 (124 aa).

It belongs to the bacterial ribosomal protein bL12 family. As to quaternary structure, homodimer. Part of the ribosomal stalk of the 50S ribosomal subunit. Forms a multimeric L10(L12)X complex, where L10 forms an elongated spine to which 2 to 4 L12 dimers bind in a sequential fashion. Binds GTP-bound translation factors.

Forms part of the ribosomal stalk which helps the ribosome interact with GTP-bound translation factors. Is thus essential for accurate translation. This Bacteroides fragilis (strain ATCC 25285 / DSM 2151 / CCUG 4856 / JCM 11019 / LMG 10263 / NCTC 9343 / Onslow / VPI 2553 / EN-2) protein is Large ribosomal subunit protein bL12.